We begin with the raw amino-acid sequence, 176 residues long: Inorganic pyrophosphatase (176 aa).

K30, R44, and Y56 together coordinate substrate. D66, D71, and D103 together coordinate Mg(2+). Y142 is a substrate binding site.

Belongs to the PPase family. As to quaternary structure, homohexamer. Mg(2+) is required as a cofactor.

Its subcellular location is the cytoplasm. It carries out the reaction diphosphate + H2O = 2 phosphate + H(+). Catalyzes the hydrolysis of inorganic pyrophosphate (PPi) forming two phosphate ions. The chain is Inorganic pyrophosphatase from Escherichia coli O6:H1 (strain CFT073 / ATCC 700928 / UPEC).